Reading from the N-terminus, the 320-residue chain is Ferrochelatase (320 aa).

Positions 194 and 275 each coordinate Fe cation.

It belongs to the ferrochelatase family.

The protein resides in the cytoplasm. It carries out the reaction heme b + 2 H(+) = protoporphyrin IX + Fe(2+). Its pathway is porphyrin-containing compound metabolism; protoheme biosynthesis; protoheme from protoporphyrin-IX: step 1/1. In terms of biological role, catalyzes the ferrous insertion into protoporphyrin IX. This chain is Ferrochelatase, found in Xylella fastidiosa (strain 9a5c).